Reading from the N-terminus, the 310-residue chain is Glycerol-3-phosphate dehydrogenase [NAD(P)+] (310 aa).

NADPH contacts are provided by tryptophan 19, arginine 39, arginine 40, and lysine 87. Positions 87 and 115 each coordinate sn-glycerol 3-phosphate. Residue serine 119 coordinates NADPH. Residues lysine 170, aspartate 223, serine 233, arginine 234, and asparagine 235 each contribute to the sn-glycerol 3-phosphate site. Lysine 170 (proton acceptor) is an active-site residue. Arginine 234 is an NADPH binding site. Glutamate 260 contributes to the NADPH binding site.

It belongs to the NAD-dependent glycerol-3-phosphate dehydrogenase family.

The protein resides in the cytoplasm. It carries out the reaction sn-glycerol 3-phosphate + NAD(+) = dihydroxyacetone phosphate + NADH + H(+). It catalyses the reaction sn-glycerol 3-phosphate + NADP(+) = dihydroxyacetone phosphate + NADPH + H(+). The protein operates within membrane lipid metabolism; glycerophospholipid metabolism. Catalyzes the reduction of the glycolytic intermediate dihydroxyacetone phosphate (DHAP) to sn-glycerol 3-phosphate (G3P), the key precursor for phospholipid synthesis. The chain is Glycerol-3-phosphate dehydrogenase [NAD(P)+] from Synechococcus sp. (strain JA-3-3Ab) (Cyanobacteria bacterium Yellowstone A-Prime).